The primary structure comprises 1002 residues: Mannan endo-1,4-beta-mannosidase (1002 aa).

Positions 1 to 28 (MKTTVTKLLATVAAASTIFGMSTLPAFA) are cleaved as a signal peptide. The GH26 domain maps to 49–396 (AETRALFDKL…ADSNKNLMAS (348 aa)). His144 contributes to the substrate binding site. The active-site Proton donor is Glu205. Positions 210 and 278 each coordinate substrate. Catalysis depends on Glu316, which acts as the Nucleophile. Position 384 (Lys384) interacts with substrate. 2 CBM11 domains span residues 523-703 (VDNV…GKRD) and 717-897 (AKAQ…NEQT). Disordered regions lie at residues 702 to 722 (RDAYAPNTNPTPGNTAKAQSV) and 888 to 969 (PAEN…LSRT). Residues 707–719 (PNTNPTPGNTAKA) show a composition bias toward polar residues. Basic and acidic residues-rich tracts occupy residues 897 to 913 (TPKDESKTEVKADKEQE) and 952 to 966 (PDTKEPADNTGKDGL). The LPXTG sorting signal motif lies at 966–970 (LSRTG). Thr969 bears the Pentaglycyl murein peptidoglycan amidated threonine mark. Residues 970 to 1002 (GSNIISAIAAVAVLLLGGCAVLIARKRKGGDIE) constitute a propeptide, removed by sortase.

This sequence belongs to the glycosyl hydrolase 26 family. Homodimer.

The protein resides in the secreted. It localises to the cell wall. It carries out the reaction Random hydrolysis of (1-&gt;4)-beta-D-mannosidic linkages in mannans, galactomannans and glucomannans.. Beta-mannanase likely involved in the utilization of carbohydrates in the human gut. Catalyzes the hydrolysis of different beta-1,4-linked mannans, such as ivory nut mannan, konjac glucomannan, as well as carob and guar gum galactomannans, to a mixture of oligosaccharides. The dominant product from ivory nut mannan is found to be mannotriose; mannobiose and mannotetraose are produced to a lesser extent. Does not hydrolyze mannobiose, and hydrolyzes mannotriose at a significantly lower rate than the longer oligosaccharides. This chain is Mannan endo-1,4-beta-mannosidase, found in Bifidobacterium adolescentis (strain ATCC 15703 / DSM 20083 / NCTC 11814 / E194a).